The chain runs to 244 residues: ATP synthase subunit a (244 aa).

Helical transmembrane passes span 17–37 (LTNILMITVASVIVLLIAILT), 75–95 (FLALGVTLLMYIFVSNMLGLP), 112–132 (DPAITLTLAVMVVALTHYYGV), 170–190 (LYGNIFAGEILLGLLAGLATS), and 221–241 (GAIQAFIFTMLTMVYMSHKIS).

The protein belongs to the ATPase A chain family. In terms of assembly, F-type ATPases have 2 components, CF(1) - the catalytic core - and CF(0) - the membrane proton channel. CF(1) has five subunits: alpha(3), beta(3), gamma(1), delta(1), epsilon(1). CF(0) has three main subunits: a(1), b(2) and c(9-12). The alpha and beta chains form an alternating ring which encloses part of the gamma chain. CF(1) is attached to CF(0) by a central stalk formed by the gamma and epsilon chains, while a peripheral stalk is formed by the delta and b chains. The F(1)F(0) complex interacts with SpoIIIJ and YqjG; YqgA is found in the same complex.

It is found in the cell membrane. Functionally, key component of the proton channel; it plays a direct role in the translocation of protons across the membrane. This is ATP synthase subunit a from Bacillus subtilis (strain 168).